The following is a 236-amino-acid chain: Purine nucleoside phosphorylase DeoD-type 2 (236 aa).

His-5 lines the a purine D-ribonucleoside pocket. Residues Gly-21, Arg-25, Arg-44, and 88-91 (RVGT) contribute to the phosphate site. A purine D-ribonucleoside is bound by residues 180–182 (EME) and 204–205 (SD). The active-site Proton donor is Asp-205.

This sequence belongs to the PNP/UDP phosphorylase family. As to quaternary structure, homohexamer; trimer of homodimers.

The enzyme catalyses a purine D-ribonucleoside + phosphate = a purine nucleobase + alpha-D-ribose 1-phosphate. It carries out the reaction a purine 2'-deoxy-D-ribonucleoside + phosphate = a purine nucleobase + 2-deoxy-alpha-D-ribose 1-phosphate. In terms of biological role, catalyzes the reversible phosphorolytic breakdown of the N-glycosidic bond in the beta-(deoxy)ribonucleoside molecules, with the formation of the corresponding free purine bases and pentose-1-phosphate. The polypeptide is Purine nucleoside phosphorylase DeoD-type 2 (Shewanella oneidensis (strain ATCC 700550 / JCM 31522 / CIP 106686 / LMG 19005 / NCIMB 14063 / MR-1)).